The chain runs to 437 residues: GTPase Der (437 aa).

EngA-type G domains lie at 4 to 167 and 176 to 352; these read PVVA…PDEA and IRFS…DNHR. Residues 10–17, 57–61, 119–122, 182–189, 230–234, and 295–298 contribute to the GTP site; these read GRPNVGKS, DTGGI, NKVD, DTAGM, and NKWD. A KH-like domain is found at 353–437; sequence KRISSSTLND…PIKLIVRARK (85 aa).

It belongs to the TRAFAC class TrmE-Era-EngA-EngB-Septin-like GTPase superfamily. EngA (Der) GTPase family. Associates with the 50S ribosomal subunit.

Its function is as follows. GTPase that plays an essential role in the late steps of ribosome biogenesis. This chain is GTPase Der, found in Leuconostoc citreum (strain KM20).